The chain runs to 454 residues: tRNA modification GTPase MnmE (454 aa).

Residues Arg-23, Glu-80, and Lys-120 each contribute to the (6S)-5-formyl-5,6,7,8-tetrahydrofolate site. Positions Gly-216–Gly-377 constitute a TrmE-type G domain. Asn-226 serves as a coordination point for K(+). GTP is bound by residues Asn-226 to Ser-231, Thr-245 to Thr-251, Asp-270 to Gly-273, Asn-335 to Asp-338, and Ser-358 to Arg-360. Ser-230 is a binding site for Mg(2+). Residues Thr-245, Ile-247, and Thr-250 each coordinate K(+). A Mg(2+)-binding site is contributed by Thr-251. Position 454 (Lys-454) interacts with (6S)-5-formyl-5,6,7,8-tetrahydrofolate.

This sequence belongs to the TRAFAC class TrmE-Era-EngA-EngB-Septin-like GTPase superfamily. TrmE GTPase family. As to quaternary structure, homodimer. Heterotetramer of two MnmE and two MnmG subunits. Requires K(+) as cofactor.

The protein localises to the cytoplasm. Exhibits a very high intrinsic GTPase hydrolysis rate. Involved in the addition of a carboxymethylaminomethyl (cmnm) group at the wobble position (U34) of certain tRNAs, forming tRNA-cmnm(5)s(2)U34. The chain is tRNA modification GTPase MnmE from Escherichia coli O139:H28 (strain E24377A / ETEC).